Reading from the N-terminus, the 311-residue chain is Bifunctional protein FolD (311 aa).

NADP(+)-binding positions include 184 to 186 (GAS), I209, and I250.

It belongs to the tetrahydrofolate dehydrogenase/cyclohydrolase family. In terms of assembly, homodimer.

It carries out the reaction (6R)-5,10-methylene-5,6,7,8-tetrahydrofolate + NADP(+) = (6R)-5,10-methenyltetrahydrofolate + NADPH. The catalysed reaction is (6R)-5,10-methenyltetrahydrofolate + H2O = (6R)-10-formyltetrahydrofolate + H(+). It functions in the pathway one-carbon metabolism; tetrahydrofolate interconversion. Its function is as follows. Catalyzes the oxidation of 5,10-methylenetetrahydrofolate to 5,10-methenyltetrahydrofolate and then the hydrolysis of 5,10-methenyltetrahydrofolate to 10-formyltetrahydrofolate. This chain is Bifunctional protein FolD, found in Gluconacetobacter diazotrophicus (strain ATCC 49037 / DSM 5601 / CCUG 37298 / CIP 103539 / LMG 7603 / PAl5).